Here is a 147-residue protein sequence, read N- to C-terminus: Cytochrome c-type biogenesis protein CcmE (147 aa).

Residues 1-9 (MKSLKKQRR) are Cytoplasmic-facing. A helical; Signal-anchor for type II membrane protein membrane pass occupies residues 10–30 (IQIIALATVALVGSTALIGYA). Topologically, residues 31 to 147 (MRDGINYFRS…EQGVYREGDS (117 aa)) are periplasmic. 2 residues coordinate heme: His123 and Tyr127.

It belongs to the CcmE/CycJ family.

The protein localises to the cell inner membrane. Its function is as follows. Heme chaperone required for the biogenesis of c-type cytochromes. Transiently binds heme delivered by CcmC and transfers the heme to apo-cytochromes in a process facilitated by CcmF and CcmH. The polypeptide is Cytochrome c-type biogenesis protein CcmE (Ruegeria sp. (strain TM1040) (Silicibacter sp.)).